Reading from the N-terminus, the 360-residue chain is NAD(P)H-quinone oxidoreductase subunit 1, chloroplastic (360 aa).

Transmembrane regions (helical) follow at residues 27-47, 98-118, 129-149, 165-185, 203-223, 248-268, 269-289, 297-317, and 340-360; these read IWIF…VLVI, FSIG…VIPF, IGIF…LMSG, AAQS…ISLL, FWGW…ISSL, YSGI…LISS, LFVT…ISIL, IFGT…FLFI, and FLLP…LFSL.

Belongs to the complex I subunit 1 family. In terms of assembly, NDH is composed of at least 16 different subunits, 5 of which are encoded in the nucleus.

The protein localises to the plastid. The protein resides in the chloroplast thylakoid membrane. It carries out the reaction a plastoquinone + NADH + (n+1) H(+)(in) = a plastoquinol + NAD(+) + n H(+)(out). It catalyses the reaction a plastoquinone + NADPH + (n+1) H(+)(in) = a plastoquinol + NADP(+) + n H(+)(out). Its function is as follows. NDH shuttles electrons from NAD(P)H:plastoquinone, via FMN and iron-sulfur (Fe-S) centers, to quinones in the photosynthetic chain and possibly in a chloroplast respiratory chain. The immediate electron acceptor for the enzyme in this species is believed to be plastoquinone. Couples the redox reaction to proton translocation, and thus conserves the redox energy in a proton gradient. The polypeptide is NAD(P)H-quinone oxidoreductase subunit 1, chloroplastic (Olimarabidopsis pumila (Dwarf rocket)).